We begin with the raw amino-acid sequence, 248 residues long: tRNA (guanine-N(7)-)-methyltransferase (248 aa).

S-adenosyl-L-methionine-binding positions include Gly-70, 93-94 (EI), 129-130 (NA), and Leu-149. The active site involves Asp-152. 227–229 (SEE) is a binding site for S-adenosyl-L-methionine.

Belongs to the class I-like SAM-binding methyltransferase superfamily. TrmB family.

It localises to the nucleus. It catalyses the reaction guanosine(46) in tRNA + S-adenosyl-L-methionine = N(7)-methylguanosine(46) in tRNA + S-adenosyl-L-homocysteine. It participates in tRNA modification; N(7)-methylguanine-tRNA biosynthesis. Its function is as follows. Catalyzes the formation of N(7)-methylguanine at position 46 (m7G46) in tRNA. This Drosophila mojavensis (Fruit fly) protein is tRNA (guanine-N(7)-)-methyltransferase.